A 474-amino-acid chain; its full sequence is MTIFERSKKGRKAFRLPESDIPEYSLPDRFLRRTPPELPEVSEPDLVRHYTNLARKNYSVDLGIYPLGSCTMKYNPKLNEKAANLEGFREIHPYQPVETVQGSLRLMYELKKMLCEITGMDDMTLQPAAGAHGELTGMLIVREYFKNRGDTGRKKVLVPDSAHGTNPASASMVGFEVVEIKSKNGMVDVEDLKKLLDEEVAAVMLTNPNTLGLFEKDILKIAEMTHECGALLYYDGANLNAIMGKVRPGDMGFDIVHLNLHKTFSTPHGMGGPGSGPVGVKKHLVDFLPFPQVKKNGELYELFVPEKTIGRVRSFFGNFPVLVKAYTYILTMGRDGLERVSEMAVLNANYLKKKIEKFLEIPYNGFCMHEFVASAEKVFRETGVRTLDIAKRILDFGVHPPTVYFPLIVPEALMIEPTETENKETLDKYAEILERVVKEAYENPDALKNAPHNTPVRRVNEVLASKKPVFRWRG.

Residue K262 is modified to N6-(pyridoxal phosphate)lysine.

This sequence belongs to the GcvP family. C-terminal subunit subfamily. In terms of assembly, the glycine cleavage system is composed of four proteins: P, T, L and H. In this organism, the P 'protein' is a heterodimer of two subunits. Pyridoxal 5'-phosphate serves as cofactor.

The enzyme catalyses N(6)-[(R)-lipoyl]-L-lysyl-[glycine-cleavage complex H protein] + glycine + H(+) = N(6)-[(R)-S(8)-aminomethyldihydrolipoyl]-L-lysyl-[glycine-cleavage complex H protein] + CO2. In terms of biological role, the glycine cleavage system catalyzes the degradation of glycine. The P protein binds the alpha-amino group of glycine through its pyridoxal phosphate cofactor; CO(2) is released and the remaining methylamine moiety is then transferred to the lipoamide cofactor of the H protein. This chain is Probable glycine dehydrogenase (decarboxylating) subunit 2, found in Thermotoga maritima (strain ATCC 43589 / DSM 3109 / JCM 10099 / NBRC 100826 / MSB8).